The sequence spans 740 residues: Catalase-peroxidase (740 aa).

Residues 102-229 (WHAAGTYRTG…LAAIQMGLIY (128 aa)) constitute a cross-link (tryptophyl-tyrosyl-methioninium (Trp-Tyr) (with M-256)). Residue His-103 is the Proton acceptor of the active site. The tract at residues 111–130 (GDGRGGSSSGQQRFAPLNSW) is disordered. The tryptophyl-tyrosyl-methioninium (Tyr-Met) (with W-102) cross-link spans 229–256 (YVNPEGPGGDPHDPEGMARDMRETFARM). His-271 contributes to the heme b binding site.

Belongs to the peroxidase family. Peroxidase/catalase subfamily. In terms of assembly, homodimer or homotetramer. Requires heme b as cofactor. In terms of processing, formation of the three residue Trp-Tyr-Met cross-link is important for the catalase, but not the peroxidase activity of the enzyme.

The enzyme catalyses H2O2 + AH2 = A + 2 H2O. The catalysed reaction is 2 H2O2 = O2 + 2 H2O. Functionally, bifunctional enzyme with both catalase and broad-spectrum peroxidase activity. The protein is Catalase-peroxidase of Erythrobacter litoralis (strain HTCC2594).